Reading from the N-terminus, the 597-residue chain is Elongation factor 4 (597 aa).

The tr-type G domain occupies 2 to 184 (KHIRNFSIIA…TIVKSIPAPE (183 aa)). GTP is bound by residues 14-19 (DHGKST) and 131-134 (NKID).

The protein belongs to the TRAFAC class translation factor GTPase superfamily. Classic translation factor GTPase family. LepA subfamily.

It is found in the cell inner membrane. The enzyme catalyses GTP + H2O = GDP + phosphate + H(+). In terms of biological role, required for accurate and efficient protein synthesis under certain stress conditions. May act as a fidelity factor of the translation reaction, by catalyzing a one-codon backward translocation of tRNAs on improperly translocated ribosomes. Back-translocation proceeds from a post-translocation (POST) complex to a pre-translocation (PRE) complex, thus giving elongation factor G a second chance to translocate the tRNAs correctly. Binds to ribosomes in a GTP-dependent manner. This Aliivibrio fischeri (strain MJ11) (Vibrio fischeri) protein is Elongation factor 4.